A 457-amino-acid polypeptide reads, in one-letter code: Siroheme synthase (457 aa).

A precorrin-2 dehydrogenase /sirohydrochlorin ferrochelatase region spans residues 1 to 204 (MDHLPIFCQL…NDQKAITETT (204 aa)). NAD(+) contacts are provided by residues 22–23 (DV) and 43–44 (LA). At Ser-128 the chain carries Phosphoserine. The segment at 216 to 457 (GEVVLVGAGP…RDKLNWFSNH (242 aa)) is uroporphyrinogen-III C-methyltransferase. Pro-225 contacts S-adenosyl-L-methionine. Asp-248 (proton acceptor) is an active-site residue. The active-site Proton donor is Lys-270. Residues 301–303 (GGD), Ile-306, 331–332 (TA), Met-382, and Gly-411 each bind S-adenosyl-L-methionine.

This sequence in the N-terminal section; belongs to the precorrin-2 dehydrogenase / sirohydrochlorin ferrochelatase family. In the C-terminal section; belongs to the precorrin methyltransferase family.

The enzyme catalyses uroporphyrinogen III + 2 S-adenosyl-L-methionine = precorrin-2 + 2 S-adenosyl-L-homocysteine + H(+). The catalysed reaction is precorrin-2 + NAD(+) = sirohydrochlorin + NADH + 2 H(+). It catalyses the reaction siroheme + 2 H(+) = sirohydrochlorin + Fe(2+). It functions in the pathway cofactor biosynthesis; adenosylcobalamin biosynthesis; precorrin-2 from uroporphyrinogen III: step 1/1. It participates in cofactor biosynthesis; adenosylcobalamin biosynthesis; sirohydrochlorin from precorrin-2: step 1/1. Its pathway is porphyrin-containing compound metabolism; siroheme biosynthesis; precorrin-2 from uroporphyrinogen III: step 1/1. The protein operates within porphyrin-containing compound metabolism; siroheme biosynthesis; siroheme from sirohydrochlorin: step 1/1. It functions in the pathway porphyrin-containing compound metabolism; siroheme biosynthesis; sirohydrochlorin from precorrin-2: step 1/1. Multifunctional enzyme that catalyzes the SAM-dependent methylations of uroporphyrinogen III at position C-2 and C-7 to form precorrin-2 via precorrin-1. Then it catalyzes the NAD-dependent ring dehydrogenation of precorrin-2 to yield sirohydrochlorin. Finally, it catalyzes the ferrochelation of sirohydrochlorin to yield siroheme. The polypeptide is Siroheme synthase (Shigella boydii serotype 18 (strain CDC 3083-94 / BS512)).